Consider the following 301-residue polypeptide: Sulfate adenylyltransferase subunit 2 (301 aa).

The protein belongs to the PAPS reductase family. CysD subfamily. Heterodimer composed of CysD, the smaller subunit, and CysN.

The catalysed reaction is sulfate + ATP + H(+) = adenosine 5'-phosphosulfate + diphosphate. Its pathway is sulfur metabolism; hydrogen sulfide biosynthesis; sulfite from sulfate: step 1/3. Its function is as follows. With CysN forms the ATP sulfurylase (ATPS) that catalyzes the adenylation of sulfate producing adenosine 5'-phosphosulfate (APS) and diphosphate, the first enzymatic step in sulfur assimilation pathway. APS synthesis involves the formation of a high-energy phosphoric-sulfuric acid anhydride bond driven by GTP hydrolysis by CysN coupled to ATP hydrolysis by CysD. The sequence is that of Sulfate adenylyltransferase subunit 2 from Geobacter metallireducens (strain ATCC 53774 / DSM 7210 / GS-15).